The following is a 199-amino-acid chain: Probable GTP-binding protein EngB (199 aa).

The region spanning 28-199 is the EngB-type G domain; that stretch reads DLPEIALAGR…DSWDAILEQV (172 aa). GTP is bound by residues 36-43, 63-67, 81-84, 148-151, and 180-182; these read GRSNVGKS, GKTQL, DVPG, TKAD, and FSS. The Mg(2+) site is built by Ser-43 and Thr-65.

The protein belongs to the TRAFAC class TrmE-Era-EngA-EngB-Septin-like GTPase superfamily. EngB GTPase family. The cofactor is Mg(2+).

Its function is as follows. Necessary for normal cell division and for the maintenance of normal septation. In Streptococcus pyogenes serotype M18 (strain MGAS8232), this protein is Probable GTP-binding protein EngB.